Reading from the N-terminus, the 215-residue chain is Nucleoside triphosphate pyrophosphatase (215 aa).

Residue D77 is the Proton acceptor of the active site.

It belongs to the Maf family. A divalent metal cation serves as cofactor.

Its subcellular location is the cytoplasm. It catalyses the reaction a ribonucleoside 5'-triphosphate + H2O = a ribonucleoside 5'-phosphate + diphosphate + H(+). It carries out the reaction a 2'-deoxyribonucleoside 5'-triphosphate + H2O = a 2'-deoxyribonucleoside 5'-phosphate + diphosphate + H(+). In terms of biological role, nucleoside triphosphate pyrophosphatase. May have a dual role in cell division arrest and in preventing the incorporation of modified nucleotides into cellular nucleic acids. The sequence is that of Nucleoside triphosphate pyrophosphatase from Rickettsia africae (strain ESF-5).